The following is a 234-amino-acid chain: NLP effector protein 10 (234 aa).

An N-terminal signal peptide occupies residues 1 to 17 (MFKTFIIAAVAVATVRA). Residue Asn65 is glycosylated (N-linked (GlcNAc...) asparagine). A Conserved undecapeptide motif I motif is present at residues 101–111 (AIMYSWYFPKD). Residues 118–124 (GHRHDWE) carry the Hepta-peptide GHRHDWE motif II motif.

This sequence belongs to the Necrosis inducing protein (NPP1) family.

The protein localises to the secreted. In terms of biological role, secreted effector that contributes moderately to virulence during infection by P.capsici. Does not cause visible reaction of C.annuum for several days after inoculation, but by 7 days after inoculation, small necrotic lesions become visible. Leads only to chlorotic areas, without necrosis at 7 days after non-host N.benthamiana leaves infection. The protein is NLP effector protein 10 of Phytophthora capsici.